The sequence spans 397 residues: 1-deoxy-D-xylulose 5-phosphate reductoisomerase (397 aa).

NADPH-binding residues include Thr-12, Gly-13, Ser-14, Ile-15, Gly-38, Lys-39, Asn-40, and Asn-126. Residue Lys-127 participates in 1-deoxy-D-xylulose 5-phosphate binding. Residue Glu-128 coordinates NADPH. Position 152 (Asp-152) interacts with Mn(2+). 1-deoxy-D-xylulose 5-phosphate is bound by residues Ser-153, Glu-154, Ser-188, and His-211. Glu-154 provides a ligand contact to Mn(2+). Gly-217 is an NADPH binding site. Residues Ser-224, Asn-229, Lys-230, and Glu-233 each contribute to the 1-deoxy-D-xylulose 5-phosphate site. Residue Glu-233 coordinates Mn(2+).

It belongs to the DXR family. It depends on Mg(2+) as a cofactor. The cofactor is Mn(2+).

The enzyme catalyses 2-C-methyl-D-erythritol 4-phosphate + NADP(+) = 1-deoxy-D-xylulose 5-phosphate + NADPH + H(+). The protein operates within isoprenoid biosynthesis; isopentenyl diphosphate biosynthesis via DXP pathway; isopentenyl diphosphate from 1-deoxy-D-xylulose 5-phosphate: step 1/6. In terms of biological role, catalyzes the NADPH-dependent rearrangement and reduction of 1-deoxy-D-xylulose-5-phosphate (DXP) to 2-C-methyl-D-erythritol 4-phosphate (MEP). The chain is 1-deoxy-D-xylulose 5-phosphate reductoisomerase from Haemophilus influenzae (strain ATCC 51907 / DSM 11121 / KW20 / Rd).